Consider the following 447-residue polypeptide: MKRIVIAGTSSMVGKTTISTGIMKALSKKNNVQPYKIGPDYIDPTYHTEATENKSRNLDSFFMDKLQIRSLFKKHSKNKDISVIEGVRGLYEGISPYNDIGSTASVAKTLNAPVILLMDARSLTRSAAAIIKGFKSFDTELNIKGVIFNKIRGEGHLNKLKEAVKYYDNEIEIIGAIPRDEGLSVSQRHLGLVPTPENKQGLLERIDLWGNTVEECLDIEKIVELSDKSFDFCVDEKNKDETLWKVEKNNSKIAVAFDESFNFYYWDNFDAMEENGAKLKFFSPLNDSEVPDCDTIYLGGGYPEIFSEKLSENKSMIDSIRNFDGKIYGECGGLMYLTNSIDGKEMLKLIDANAVMTPNVQGLSYVKGTFEKDCIIGEKSKEFKAHEFHYSKLININENDFSYRINRGKGIINSMDGITSKGGDIVGGYAHQHCIGNPYFAASLSKI.

The GATase cobBQ-type domain occupies 252 to 439 (KIAVAFDESF…AHQHCIGNPY (188 aa)). The active-site Nucleophile is C331.

The protein belongs to the CobB/CbiA family. Requires Mg(2+) as cofactor.

It catalyses the reaction cob(II)yrinate + 2 L-glutamine + 2 ATP + 2 H2O = cob(II)yrinate a,c diamide + 2 L-glutamate + 2 ADP + 2 phosphate + 2 H(+). The catalysed reaction is Ni-sirohydrochlorin + 2 L-glutamine + 2 ATP + 2 H2O = Ni-sirohydrochlorin a,c-diamide + 2 L-glutamate + 2 ADP + 2 phosphate + 2 H(+). It functions in the pathway cofactor biosynthesis; adenosylcobalamin biosynthesis; cob(II)yrinate a,c-diamide from sirohydrochlorin (anaerobic route): step 10/10. Catalyzes the ATP-dependent amidation of the two carboxylate groups at positions a and c of cobyrinate, using either L-glutamine or ammonia as the nitrogen source. Involved in the biosynthesis of the unique nickel-containing tetrapyrrole coenzyme F430, the prosthetic group of methyl-coenzyme M reductase (MCR), which plays a key role in methanogenesis and anaerobic methane oxidation. Catalyzes the ATP-dependent amidation of the two carboxylate groups at positions a and c of Ni-sirohydrochlorin, using L-glutamine or ammonia as the nitrogen source. The chain is Cobyrinate a,c-diamide synthase from Methanococcus maripaludis (strain C7 / ATCC BAA-1331).